The sequence spans 243 residues: Ribonuclease PH (243 aa).

Phosphate contacts are provided by residues Arg-84 and 122–124 (GTR).

Belongs to the RNase PH family. In terms of assembly, homohexameric ring arranged as a trimer of dimers.

It catalyses the reaction tRNA(n+1) + phosphate = tRNA(n) + a ribonucleoside 5'-diphosphate. Phosphorolytic 3'-5' exoribonuclease that plays an important role in tRNA 3'-end maturation. Removes nucleotide residues following the 3'-CCA terminus of tRNAs; can also add nucleotides to the ends of RNA molecules by using nucleoside diphosphates as substrates, but this may not be physiologically important. Probably plays a role in initiation of 16S rRNA degradation (leading to ribosome degradation) during starvation. This is Ribonuclease PH from Bdellovibrio bacteriovorus (strain ATCC 15356 / DSM 50701 / NCIMB 9529 / HD100).